The primary structure comprises 75 residues: CDC42 small effector protein 2-C (75 aa).

S-palmitoyl cysteine attachment occurs at residues C10 and C11. One can recognise a CRIB domain in the interval 29–42 (IGEPMNFVHTAHVG).

This sequence belongs to the CDC42SE/SPEC family.

It is found in the cytoplasm. The protein localises to the cytoskeleton. The protein resides in the cell membrane. Its function is as follows. Probably involved in the organization of the actin cytoskeleton by acting downstream of CDC42, inducing actin filament assembly. The protein is CDC42 small effector protein 2-C (cdc42se2-c) of Xenopus laevis (African clawed frog).